The following is a 130-amino-acid chain: C-type natriuretic peptide 2 (130 aa).

Positions 1–22 (MAASSSSFVPLVLLFLAIPVEP) are cleaved as a signal peptide. A propeptide spanning residues 23–103 (RPSMTRDEAQ…LQQQSKTTRR (81 aa)) is cleaved from the precursor. Positions 57–77 (ELLPRRPGPPRSFGASPGALR) are disordered. A disulfide bond links cysteine 114 and cysteine 130.

Belongs to the natriuretic peptide family.

The protein resides in the secreted. In terms of biological role, exhibits natriuretic and vasodepressant activity. Has cGMP-stimulating activity. May help to regulate body fluid homeostasis in a variety of aquatic environments. This chain is C-type natriuretic peptide 2, found in Takifugu rubripes (Japanese pufferfish).